The chain runs to 446 residues: C4-dicarboxylate transport protein (446 aa).

The next 9 membrane-spanning stretches (helical) occupy residues 20–40 (HLYV…HFYP), 56–76 (LVKM…IAGM), 91–111 (IYFL…ANVV), 160–180 (GDIL…AGVG), 200–220 (LVHI…AFTI), 233–253 (FLIL…LGLV), 319–339 (IYMT…LSLG), 344–364 (LLLV…AGFI), and 367–387 (AATL…ILGI).

Belongs to the dicarboxylate/amino acid:cation symporter (DAACS) (TC 2.A.23) family.

Its subcellular location is the cell inner membrane. In terms of biological role, responsible for the transport of dicarboxylates such as succinate, fumarate, and malate from the periplasm across the membrane. The protein is C4-dicarboxylate transport protein of Azorhizobium caulinodans (strain ATCC 43989 / DSM 5975 / JCM 20966 / LMG 6465 / NBRC 14845 / NCIMB 13405 / ORS 571).